The sequence spans 473 residues: Glutamate--tRNA ligase 1 (473 aa).

The 'HIGH' region motif lies at 10–20 (PSPTGFLHIGG). A 'KMSKS' region motif is present at residues 252 to 256 (KLSKR). Lys-255 is a binding site for ATP.

The protein belongs to the class-I aminoacyl-tRNA synthetase family. Glutamate--tRNA ligase type 1 subfamily. In terms of assembly, monomer.

The protein localises to the cytoplasm. The enzyme catalyses tRNA(Glu) + L-glutamate + ATP = L-glutamyl-tRNA(Glu) + AMP + diphosphate. Catalyzes the attachment of glutamate to tRNA(Glu) in a two-step reaction: glutamate is first activated by ATP to form Glu-AMP and then transferred to the acceptor end of tRNA(Glu). The polypeptide is Glutamate--tRNA ligase 1 (Wolbachia pipientis wMel).